The following is a 463-amino-acid chain: Putative pentatricopeptide repeat-containing protein At4g17915 (463 aa).

PPR repeat units lie at residues 12–46 (STRL…GVDP), 47–81 (DVVT…GIRP), 82–116 (DVAT…GIYP), 117–152 (DLWS…GLNP), 153–186 (GPDT…RFKP), 187–221 (ELMT…GYTP), 222–256 (NAVT…GYTY), 257–291 (DGYA…GRRH), 292–326 (DIVS…GMKA), 327–361 (DEYT…GIGL), 362–392 (NLVT…MEVK), and 393–427 (DEYT…GIKI).

This sequence belongs to the PPR family. P subfamily.

The sequence is that of Putative pentatricopeptide repeat-containing protein At4g17915 from Arabidopsis thaliana (Mouse-ear cress).